The chain runs to 514 residues: 1,25-dihydroxyvitamin D(3) 24-hydroxylase, mitochondrial (514 aa).

The N-terminal 35 residues, 1–35 (MSCPIDKRRPLIAFLRRLRDLGQPPRSVTSKAHVK), are a transit peptide targeting the mitochondrion. Position 462 (Cys-462) interacts with heme.

The protein belongs to the cytochrome P450 family. The cofactor is heme.

It is found in the mitochondrion. It carries out the reaction calcitriol + 2 reduced [adrenodoxin] + O2 + 2 H(+) = calcitetrol + 2 oxidized [adrenodoxin] + H2O. The catalysed reaction is calcitetrol + 2 reduced [adrenodoxin] + O2 + 2 H(+) = (1S)-1,25-dihydroxy-24-oxocalciol + 2 oxidized [adrenodoxin] + 2 H2O. It catalyses the reaction (1S)-1,25-dihydroxy-24-oxocalciol + 2 reduced [adrenodoxin] + O2 + 2 H(+) = (1S)-1,23,25-trihydroxy-24-oxocalciol + 2 oxidized [adrenodoxin] + H2O. The enzyme catalyses (1S)-1,23-dihydroxy-24,25,26,27-tetranorcalciol + 2 reduced [adrenodoxin] + O2 + 2 H(+) = (1S)-1-hydroxy-23-oxo-24,25,26,27-tetranorcalciol + 2 oxidized [adrenodoxin] + 2 H2O. It carries out the reaction (1S)-1-hydroxy-23-oxo-24,25,26,27-tetranorcalciol + 2 reduced [adrenodoxin] + O2 + H(+) = calcitroate + 2 oxidized [adrenodoxin] + H2O. The catalysed reaction is calcidiol + 2 reduced [adrenodoxin] + O2 + 2 H(+) = secalciferol + 2 oxidized [adrenodoxin] + H2O. It catalyses the reaction secalciferol + 2 reduced [adrenodoxin] + O2 + 2 H(+) = 25-hydroxy-24-oxocalciol + 2 oxidized [adrenodoxin] + 2 H2O. The enzyme catalyses 25-hydroxy-24-oxocalciol + 2 reduced [adrenodoxin] + O2 + 2 H(+) = 23S,25-dihydroxy-24-oxocholecalciferol + 2 oxidized [adrenodoxin] + H2O. It carries out the reaction 20S,23-dihydroxycholecalciferol + 2 reduced [adrenodoxin] + O2 + 2 H(+) = 20S,23,25-trihydroxycholecalciferol + 2 oxidized [adrenodoxin] + H2O. The catalysed reaction is 20S,23-dihydroxycholecalciferol + 2 reduced [adrenodoxin] + O2 + 2 H(+) = 20S,23,24-trihydroxycholecalciferol + 2 oxidized [adrenodoxin] + H2O. It catalyses the reaction 20S-hydroxycholecalciferol + 2 reduced [adrenodoxin] + O2 + 2 H(+) = 20S,25-dihydroxycholecalciferol + 2 oxidized [adrenodoxin] + H2O. The enzyme catalyses 20S-hydroxycholecalciferol + 2 reduced [adrenodoxin] + O2 + 2 H(+) = 20S,24S-dihydroxycholecalciferol + 2 oxidized [adrenodoxin] + H2O. It carries out the reaction 20S-hydroxycholecalciferol + 2 reduced [adrenodoxin] + O2 + 2 H(+) = 20S,24R-dihydroxycholecalciferol + 2 oxidized [adrenodoxin] + H2O. Its function is as follows. A cytochrome P450 monooxygenase with a key role in vitamin D catabolism and calcium homeostasis. Via C24-oxidation pathway, catalyzes the inactivation of both the vitamin D precursor calcidiol (25-hydroxyvitamin D(3)) and the active hormone calcitriol (1-alpha,25-dihydroxyvitamin D(3)). With initial hydroxylation at C-24 (via C24-oxidation pathway), performs a sequential 6-step oxidation of calcitriol leading to the formation of the biliary metabolite calcitroic acid. Hydroxylates at C-24 or C-25 other vitamin D active metabolites, such as CYP11A1-derived secosteroids 20S-hydroxycholecalciferol and 20S,23-dihydroxycholecalciferol. Mechanistically, uses molecular oxygen inserting one oxygen atom into a substrate, and reducing the second into a water molecule, with two electrons provided by NADPH via FDXR/adrenodoxin reductase and FDX1/adrenodoxin. The polypeptide is 1,25-dihydroxyvitamin D(3) 24-hydroxylase, mitochondrial (Mus musculus (Mouse)).